The following is a 172-amino-acid chain: Adenine phosphoribosyltransferase (172 aa).

It belongs to the purine/pyrimidine phosphoribosyltransferase family. In terms of assembly, homodimer.

The protein localises to the cytoplasm. The catalysed reaction is AMP + diphosphate = 5-phospho-alpha-D-ribose 1-diphosphate + adenine. It functions in the pathway purine metabolism; AMP biosynthesis via salvage pathway; AMP from adenine: step 1/1. Functionally, catalyzes a salvage reaction resulting in the formation of AMP, that is energically less costly than de novo synthesis. The sequence is that of Adenine phosphoribosyltransferase from Ligilactobacillus salivarius (strain UCC118) (Lactobacillus salivarius).